Reading from the N-terminus, the 223-residue chain is Voltage-dependent calcium channel gamma-1 subunit (223 aa).

Residues 1-10 (MSQTKTAKVR) are Cytoplasmic-facing. The helical transmembrane segment at 11–29 (VTLFFILVGGVLAMVAVVT) threads the bilayer. Residues 30-109 (DHWAVLSPHL…TQKEYSISAA (80 aa)) lie on the Extracellular side of the membrane. Residues asparagine 43 and asparagine 80 are each glycosylated (N-linked (GlcNAc...) asparagine). An intrachain disulfide couples cysteine 57 to cysteine 81. Residues 110–130 (AIAIFSLGFIIVGSICAFLSF) traverse the membrane as a helical segment. The Cytoplasmic portion of the chain corresponds to 131 to 135 (GNKRD). The helical transmembrane segment at 136 to 156 (YLLRPASMFYAFAGLCLIVSV) threads the bilayer. Topologically, residues 157 to 180 (EVMRQSVKRMIDSEDTVWIEHYYS) are extracellular. Residues 181–205 (WSFACACAAFILLFLGGLFLLLFSL) traverse the membrane as a helical segment. Over 206 to 223 (PRMPQNPWESCMDAEPEH) the chain is Cytoplasmic.

It belongs to the PMP-22/EMP/MP20 family. CACNG subfamily. Component of a calcium channel complex consisting of a pore-forming alpha subunit (CACNA1S) and the ancillary subunits CACNB1 or CACNB2, CACNG1 and CACNA2D1. The channel complex contains alpha, beta, gamma and delta subunits in a 1:1:1:1 ratio, i.e. it contains either CACNB1 or CACNB2. In terms of processing, N-glycosylated. As to expression, detected in skeletal muscle (at protein level).

The protein resides in the cell membrane. The protein localises to the sarcolemma. In terms of biological role, regulatory subunit of the voltage-gated calcium channel that gives rise to L-type calcium currents in skeletal muscle. Regulates channel inactivation kinetics. The chain is Voltage-dependent calcium channel gamma-1 subunit (Cacng1) from Mus musculus (Mouse).